Consider the following 908-residue polypeptide: 5'-3' exoribonuclease 2 homolog (908 aa).

The CCHC-type zinc finger occupies 263–280; the sequence is RPCDICNGFGHEMDKCVG. Disordered stretches follow at residues 409-457 and 821-908; these read RQRR…VGNY and GGNQ…YRRF. Residues 432–454 show a composition bias toward polar residues; it reads HGSLNQSAFGASAVGPNSQQRSV. Position 438 is a phosphoserine (Ser438). 2 stretches are compositionally biased toward low complexity: residues 825-868 and 878-908; these read GQSY…HNQR and QRNFNNYNGPRNNNYQQQGGSRQQNQNYRRF.

This sequence belongs to the 5'-3' exonuclease family. XRN2/RAT1 subfamily. As to quaternary structure, interacts with cuff and Rai1; the interaction with cuff may inhibit its role in RNA degradation.

The protein resides in the nucleus. A 5'-3' exoribonuclease. May promote the termination of transcription by RNA polymerase II and promote RNA degradation. Involved in turnover of piRNA precursors. This chain is 5'-3' exoribonuclease 2 homolog, found in Drosophila melanogaster (Fruit fly).